We begin with the raw amino-acid sequence, 289 residues long: Rhodopsin (289 aa).

At 1-7 the chain is on the extracellular side; sequence YLVSPAA. Residues 8–32 traverse the membrane as a helical segment; that stretch reads YAALGAYMFLLILVGFPVNFLTLYV. At 33-44 the chain is on the cytoplasmic side; that stretch reads TLDHKKLRTPLN. The helical transmembrane segment at 45–67 threads the bilayer; sequence YILLNLAVADLFMVLGGFTTTMY. The Extracellular segment spans residues 68–81; that stretch reads TSMHGYFVLGRLGC. The cysteines at positions 81 and 158 are disulfide-linked. Residues 82–104 traverse the membrane as a helical segment; it reads NLEGFFATLGGEIALWSLVVLAI. The 'Ionic lock' involved in activated form stabilization signature appears at 105–107; it reads ERW. The Cytoplasmic portion of the chain corresponds to 105–123; that stretch reads ERWIVVCKPISNFRFTEDH. A helical membrane pass occupies residues 124–144; the sequence is AIMGLAFSWVMALTCAVPPLV. The Extracellular portion of the chain corresponds to 145–173; that stretch reads GWSRYIPEGMQCSCGVDYYTRAEGFNTES. The chain crosses the membrane as a helical span at residues 174–195; that stretch reads FVLYMFTVHFLIPLSVIFFCYG. Residues 196–223 are Cytoplasmic-facing; that stretch reads RLLCAVKEAAAAQQESETTQRAEKEVSR. The chain crosses the membrane as a helical span at residues 224–245; sequence MVVLMVIGFLVCWLPYASVAWW. Residues 246–257 lie on the Extracellular side of the membrane; the sequence is IFCNQGSEFGPI. A helical transmembrane segment spans residues 258 to 279; it reads FMTLPAFFAKTSAIYNPLIYIC. Lysine 267 is subject to N6-(retinylidene)lysine. The Cytoplasmic portion of the chain corresponds to 280–289; that stretch reads MNKQFRHCMI.

This sequence belongs to the G-protein coupled receptor 1 family. Opsin subfamily. Phosphorylated on some or all of the serine and threonine residues present in the C-terminal region. In terms of processing, contains one covalently linked retinal chromophore.

It is found in the membrane. Its subcellular location is the cell projection. The protein resides in the cilium. The protein localises to the photoreceptor outer segment. Photoreceptor required for image-forming vision at low light intensity. While most salt water fish species use retinal as chromophore, most freshwater fish use 3-dehydroretinal, or a mixture of retinal and 3-dehydroretinal. Light-induced isomerization of 11-cis to all-trans retinal triggers a conformational change that activates signaling via G-proteins. Subsequent receptor phosphorylation mediates displacement of the bound G-protein alpha subunit by arrestin and terminates signaling. In Procottus jeittelesii (Red sculpin), this protein is Rhodopsin (rho).